The sequence spans 445 residues: DDB1- and CUL4-associated factor 13 (445 aa).

Position 49 is an N6-acetyllysine (lysine 49). WD repeat units follow at residues 64 to 104, 107 to 146, 149 to 191, 194 to 234, 236 to 276, 280 to 319, and 323 to 362; these read GHRD…CIRT, AHEG…YGDE, PLHT…PICS, WGFD…PLKK, ILDM…TPVM, DHVS…SREV, and KRMQ…KLGV. Positions 353-441 are required for nucleolar location; sequence KANASEKLGV…LVSEKKKHVV (89 aa).

Belongs to the WD repeat DCAF13/WDSOF1 family. In terms of assembly, part of the small subunit (SSU) processome, composed of more than 70 proteins and the RNA chaperone small nucleolar RNA (snoRNA) U3. Component of the DCX(DCAF13) E3 ubiquitin ligase complex, at least composed of CUL4 (CUL4A or CUL4B), DDB1, DCAF13 and RBX1. Interacts (via WD40 domain) with DDB1. Interacts with ESR1 and LATS1. As to expression, expressed in the endometrium during decidualization. Expression is down-regulated in preeclampsia decidual tissues.

It is found in the nucleus. It localises to the nucleolus. It functions in the pathway protein modification; protein ubiquitination. Part of the small subunit (SSU) processome, first precursor of the small eukaryotic ribosomal subunit. During the assembly of the SSU processome in the nucleolus, many ribosome biogenesis factors, an RNA chaperone and ribosomal proteins associate with the nascent pre-rRNA and work in concert to generate RNA folding, modifications, rearrangements and cleavage as well as targeted degradation of pre-ribosomal RNA by the RNA exosome. Participates in the 18S rRNA processing in growing oocytes, being essential for oocyte nonsurrounded nucleolus (NSN) to surrounded nucleolus (SN) transition. Its function is as follows. Substrate-recognition component of a DCX (DDB1-CUL4-X-box) E3 ubiquitin-protein ligase complex that plays a key role in embryo preimplantation and is required for normal meiotic cycle progression in oocytes. Acts as a maternal factor that regulates oocyte and zygotic chromatin tightness during maternal to zygotic transition. Also involved in the transformation of the endometrium into the decidua, known as decidualization, providing a solid foundation for implantation of blastocysts. Recognizes the histone methyltransferases SUV39H1 and SUV39H2 and directs them to polyubiquitination and proteasomal degradation, which facilitates the H3K9me3 removal and early zygotic gene expression, essential steps for progressive genome reprogramming and the establishment of pluripotency during preimplantation embryonic development. Supports the spindle assembly and chromosome condensation during oocyte meiotic division by targeting the polyubiquitination and degradation of PTEN, a lipid phosphatase that inhibits PI3K pathway as well as oocyte growth and maturation. Targets PMP22 for polyubiquitination and proteasomal degradation. The polypeptide is DDB1- and CUL4-associated factor 13 (Homo sapiens (Human)).